A 268-amino-acid chain; its full sequence is Shikimate dehydrogenase (NADP(+)) (268 aa).

Residues 13-15 (SLS) and T60 contribute to the shikimate site. K64 (proton acceptor) is an active-site residue. D76 contacts NADP(+). Shikimate contacts are provided by N85 and D100. NADP(+) is bound by residues 124 to 128 (GAGGA), 148 to 153 (NRTMSR), and I209. Y211 contacts shikimate. Residue G232 coordinates NADP(+).

This sequence belongs to the shikimate dehydrogenase family. As to quaternary structure, homodimer.

The enzyme catalyses shikimate + NADP(+) = 3-dehydroshikimate + NADPH + H(+). It functions in the pathway metabolic intermediate biosynthesis; chorismate biosynthesis; chorismate from D-erythrose 4-phosphate and phosphoenolpyruvate: step 4/7. Its function is as follows. Involved in the biosynthesis of the chorismate, which leads to the biosynthesis of aromatic amino acids. Catalyzes the reversible NADPH linked reduction of 3-dehydroshikimate (DHSA) to yield shikimate (SA). The chain is Shikimate dehydrogenase (NADP(+)) from Staphylococcus haemolyticus (strain JCSC1435).